The chain runs to 598 residues: Acetylcholine receptor subunit alpha-type acr-5 (598 aa).

The first 16 residues, 1 to 16 (MLPNIILILLIRYCSC), serve as a signal peptide directing secretion. At 17 to 323 (GAGSRVYEKY…HLVIRRKPLY (307 aa)) the chain is on the extracellular side. Residues asparagine 54, asparagine 71, asparagine 77, asparagine 134, asparagine 178, and asparagine 252 are each glycosylated (N-linked (GlcNAc...) asparagine). Residues 324–344 (YMINLVVPTSIITIVAVTGFF) form a helical membrane-spanning segment. Topologically, residues 345-356 (TPTSSSSERDEK) are cytoplasmic. A helical transmembrane segment spans residues 357–377 (LYLGINTLLTMSVMMLMVCNQ). At 378–391 (MPSTSTYVPLMSWY) the chain is on the extracellular side. The chain crosses the membrane as a helical span at residues 392–412 (YIGIIMVIVVGTFLATGVLAI). Over 413–563 (HGQKHYNKPI…WEFLANVLDR (151 aa)) the chain is Cytoplasmic. The helical transmembrane segment at 564-584 (ILLTIFCGFTFAVFIILIGFD) threads the bilayer. Residues 585–598 (SFFTFHTDSPPKTM) are Extracellular-facing.

This sequence belongs to the ligand-gated ion channel (TC 1.A.9) family. Acetylcholine receptor (TC 1.A.9.1) subfamily.

The protein localises to the postsynaptic cell membrane. Its subcellular location is the cell membrane. Its function is as follows. Subunit of nicotinic acetylcholine receptor (nAChR). Involved in nAChR sensitivity to nicotine. Modulates locomotion towards the drug nicotine. The protein is Acetylcholine receptor subunit alpha-type acr-5 of Caenorhabditis elegans.